The chain runs to 705 residues: Elongation factor G (705 aa).

Residues 7–287 form the tr-type G domain; the sequence is HLTRNIGIMA…YVCAFLPSPL (281 aa). Residues 16 to 23, 84 to 88, and 138 to 141 each bind GTP; these read AHIDAGKT, DTPGH, and NKMD. Residues 291–312 form a disordered region; that stretch reads NVVGTNPDTGAEEDRKPSEDDK. A compositionally biased stretch (basic and acidic residues) spans 302–312; it reads EEDRKPSEDDK.

This sequence belongs to the TRAFAC class translation factor GTPase superfamily. Classic translation factor GTPase family. EF-G/EF-2 subfamily.

The protein resides in the cytoplasm. In terms of biological role, catalyzes the GTP-dependent ribosomal translocation step during translation elongation. During this step, the ribosome changes from the pre-translocational (PRE) to the post-translocational (POST) state as the newly formed A-site-bound peptidyl-tRNA and P-site-bound deacylated tRNA move to the P and E sites, respectively. Catalyzes the coordinated movement of the two tRNA molecules, the mRNA and conformational changes in the ribosome. The sequence is that of Elongation factor G from Bacteroides fragilis (strain ATCC 25285 / DSM 2151 / CCUG 4856 / JCM 11019 / LMG 10263 / NCTC 9343 / Onslow / VPI 2553 / EN-2).